Reading from the N-terminus, the 321-residue chain is AA9 family lytic polysaccharide monooxygenase C (321 aa).

Residues 1-18 (MKLQLIIPFSFLISYVSA) form the signal peptide. H19 contributes to the Cu(2+) binding site. Residue N33 is glycosylated (N-linked (GlcNAc...) asparagine). Intrachain disulfides connect C57–C191 and C161–C242. H103 contributes to the Cu(2+) binding site. O2-binding residues include H177 and Q186. Y188 is a Cu(2+) binding site. An N-linked (GlcNAc...) asparagine glycan is attached at N195. A CBM1 domain is found at 283-319 (GTAAIYAQCGGQGWTGATVCASGSKCVVSSAFYSQCL).

It belongs to the polysaccharide monooxygenase AA9 family. It depends on Cu(2+) as a cofactor.

It localises to the secreted. The enzyme catalyses [(1-&gt;4)-beta-D-glucosyl]n+m + reduced acceptor + O2 = 4-dehydro-beta-D-glucosyl-[(1-&gt;4)-beta-D-glucosyl]n-1 + [(1-&gt;4)-beta-D-glucosyl]m + acceptor + H2O.. Its function is as follows. Major lytic polysaccharide monooxygenase (LPMO) that depolymerizes crystalline and amorphous polysaccharides via the oxidation of scissile alpha- or beta-(1-4)-glycosidic bonds, yielding C1 and C4 oxidation products. Catalysis by LPMOs requires the reduction of the active-site copper from Cu(II) to Cu(I) by a reducing agent and H(2)O(2) or O(2) as a cosubstrate. The sequence is that of AA9 family lytic polysaccharide monooxygenase C from Botryotinia fuckeliana (strain B05.10) (Noble rot fungus).